Consider the following 245-residue polypeptide: Large ribosomal subunit protein uL2 (245 aa).

Residues 198 to 245 (VSHPHGGGSHKRPGKPTTVARTAPPGQKVGHIAARKTGRAKRRAATKR) are disordered. Residues 230-245 (AARKTGRAKRRAATKR) show a composition bias toward basic residues.

Belongs to the universal ribosomal protein uL2 family. Part of the 50S ribosomal subunit. Forms a bridge to the 30S subunit in the 70S ribosome.

Functionally, one of the primary rRNA binding proteins. Required for association of the 30S and 50S subunits to form the 70S ribosome, for tRNA binding and peptide bond formation. It has been suggested to have peptidyltransferase activity; this is somewhat controversial. Makes several contacts with the 16S rRNA in the 70S ribosome. The sequence is that of Large ribosomal subunit protein uL2 from Korarchaeum cryptofilum (strain OPF8).